A 319-amino-acid polypeptide reads, in one-letter code: N-acyl-aromatic-L-amino acid amidohydrolase (carboxylate-forming) (319 aa).

Residues 1 to 210 are hydrolytic domain; the sequence is MCSLPGSRKP…SILDFIELFN (210 aa). The Zn(2+) site is built by His21 and Glu24. Residues Arg63 and 70–71 contribute to the substrate site; that span reads NR. Zn(2+) is bound at residue His116. Substrate-binding residues include Glu178 and Tyr288. The interval 211 to 318 is shielding domain; sequence QGMEFPAFEM…PGLTPSSTQT (108 aa). Phosphothreonine is present on Thr318.

This sequence belongs to the AspA/AstE family. Aspartoacylase subfamily. As to quaternary structure, exists as a mixture of homodimers and homotetramer, both catalytically active. Zn(2+) is required as a cofactor.

It localises to the apical cell membrane. The protein localises to the cytoplasm. The catalysed reaction is an N-acyl-aromatic L-alpha-amino acid + H2O = an aromatic L-alpha-amino acid + a carboxylate. It catalyses the reaction an N-acetyl-L-cysteine-S-conjugate + H2O = an S-substituted L-cysteine + acetate. Plays an important role in deacetylating mercapturic acids in kidney proximal tubules. Also acts on N-acetyl-aromatic amino acids. In Rattus norvegicus (Rat), this protein is N-acyl-aromatic-L-amino acid amidohydrolase (carboxylate-forming) (Acy3).